Consider the following 1012-residue polypeptide: Structural polyprotein (1012 aa).

Position 30 (Asp-30) interacts with a divalent metal cation. The Peptidase S50 domain occupies 513 to 755; it reads ADKGYEVVAN…AGRQYHLAMA (243 aa). Ser-652 (nucleophile) is an active-site residue. Residue Lys-692 is part of the active site. A disordered region spans residues 970-1012; that stretch reads MEMKHRNPRRAPPKPKPKPNAPSQRPPGRLGRWIRTVSDEDLE. The span at 975 to 986 shows a compositional bias: basic residues; sequence RNPRRAPPKPKP. The interval 1003–1012 is interaction with VP1 protein; sequence IRTVSDEDLE.

As to quaternary structure, homotrimer. A central divalent metal stabilizes the VP2 trimer. Interacts with host ITGA4/ITGB1. Homodimer. Interacts (via C-terminus) with VP1 in the cytoplasm. Interacts with VP2. Post-translationally, specific enzymatic cleavages yield mature proteins. The capsid assembly seems to be regulated by polyprotein processing. The protease VP4 cleaves itself off the polyprotein, thus releasing pre-VP2 and VP3 within the infected cell. During capsid assembly, the C-terminus of pre-VP2 is further processed by VP4, giving rise to VP2, the external capsid protein and three small peptides that all stay closely associated with the capsid.

It localises to the virion. The protein resides in the host cytoplasm. Capsid protein VP2 self assembles to form an icosahedral capsid with a T=13 symmetry, about 70 nm in diameter, and consisting of 260 VP2 trimers. The capsid encapsulates the genomic dsRNA. VP2 is also involved in attachment and entry into the host cell by interacting with host ITGA4/ITGB1. Its function is as follows. The precursor of VP2 plays an important role in capsid assembly. First, pre-VP2 and VP2 oligomers assemble to form a procapsid. Then, the pre-VP2 intermediates may be processed into VP2 proteins by proteolytic cleavage mediated by VP4 to obtain the mature virion. The final capsid is composed of pentamers and hexamers but VP2 has a natural tendency to assemble into all-pentameric structures. Therefore pre-VP2 may be required to allow formation of the hexameric structures. Functionally, protease VP4 is a serine protease that cleaves the polyprotein into its final products. Pre-VP2 is first partially cleaved, and may be completely processed by VP4 upon capsid maturation. In terms of biological role, capsid protein VP3 plays a key role in virion assembly by providing a scaffold for the capsid made of VP2. May self-assemble to form a T=4-like icosahedral inner-capsid composed of at least 180 trimers. Plays a role in genomic RNA packaging by recruiting VP1 into the capsid and interacting with the dsRNA genome segments to form a ribonucleoprotein complex. Additionally, the interaction of the VP3 C-terminal tail with VP1 removes the inherent structural blockade of the polymerase active site. Thus, VP3 can also function as a transcriptional activator. Structural peptide 1 is a small peptide derived from pre-VP2 C-terminus. It destabilizes and perforates cell membranes, suggesting a role during entry. Its function is as follows. Structural peptide 2 is a small peptide derived from pVP2 C-terminus. It is not essential for the virus viability, but viral growth is affected when missing. Functionally, structural peptide 3 is a small peptide derived from pVP2 C-terminus. It is not essential for the virus viability, but viral growth is affected when missing. In terms of biological role, structural peptide 4 is a small peptide derived from pVP2 C-terminus. It is essential for the virus viability. The protein is Structural polyprotein of Avian infectious bursal disease virus (strain Australian 002-73) (IBDV).